Reading from the N-terminus, the 315-residue chain is Ribosomal protein L11 methyltransferase (315 aa).

S-adenosyl-L-methionine is bound by residues Thr-164, Gly-185, Asp-207, and Asn-249.

Belongs to the methyltransferase superfamily. PrmA family.

It is found in the cytoplasm. The catalysed reaction is L-lysyl-[protein] + 3 S-adenosyl-L-methionine = N(6),N(6),N(6)-trimethyl-L-lysyl-[protein] + 3 S-adenosyl-L-homocysteine + 3 H(+). Methylates ribosomal protein L11. The sequence is that of Ribosomal protein L11 methyltransferase from Lactobacillus gasseri (strain ATCC 33323 / DSM 20243 / BCRC 14619 / CIP 102991 / JCM 1131 / KCTC 3163 / NCIMB 11718 / NCTC 13722 / AM63).